The following is a 99-amino-acid chain: NADH-quinone oxidoreductase subunit K (99 aa).

Helical transmembrane passes span 3–23 (PDNY…GVLL), 28–48 (IVVF…FVAF), and 59–79 (VVAF…LAII).

It belongs to the complex I subunit 4L family. In terms of assembly, NDH-1 is composed of 14 different subunits. Subunits NuoA, H, J, K, L, M, N constitute the membrane sector of the complex.

Its subcellular location is the cell membrane. It catalyses the reaction a quinone + NADH + 5 H(+)(in) = a quinol + NAD(+) + 4 H(+)(out). Its function is as follows. NDH-1 shuttles electrons from NADH, via FMN and iron-sulfur (Fe-S) centers, to quinones in the respiratory chain. The immediate electron acceptor for the enzyme in this species is believed to be a menaquinone. Couples the redox reaction to proton translocation (for every two electrons transferred, four hydrogen ions are translocated across the cytoplasmic membrane), and thus conserves the redox energy in a proton gradient. This is NADH-quinone oxidoreductase subunit K from Mycobacterium sp. (strain JLS).